Reading from the N-terminus, the 186-residue chain is 2-oxoglutarate synthase subunit KorC (186 aa).

As to quaternary structure, heterotetramer of the KorA, KorB, KorC and KorD subunits.

It catalyses the reaction 2 oxidized [2Fe-2S]-[ferredoxin] + 2-oxoglutarate + CoA = succinyl-CoA + 2 reduced [2Fe-2S]-[ferredoxin] + CO2 + H(+). This Methanothermobacter marburgensis (strain ATCC BAA-927 / DSM 2133 / JCM 14651 / NBRC 100331 / OCM 82 / Marburg) (Methanobacterium thermoautotrophicum) protein is 2-oxoglutarate synthase subunit KorC (korC).